We begin with the raw amino-acid sequence, 447 residues long: Ribosomal protein uS12 methylthiotransferase RimO (447 aa).

An MTTase N-terminal domain is found at 4–114; the sequence is PKVGFVSLGC…VMEAVHEYVP (111 aa). 6 residues coordinate [4Fe-4S] cluster: cysteine 13, cysteine 49, cysteine 78, cysteine 147, cysteine 151, and cysteine 154. Residues 133–370 form the Radical SAM core domain; it reads LTPKHYAYLK…MQVQQEISAA (238 aa). Residues 373–443 enclose the TRAM domain; it reads QKRIGQTMTV…EYDLFAKLIQ (71 aa).

Belongs to the methylthiotransferase family. RimO subfamily. [4Fe-4S] cluster is required as a cofactor.

It is found in the cytoplasm. The catalysed reaction is L-aspartate(89)-[ribosomal protein uS12]-hydrogen + (sulfur carrier)-SH + AH2 + 2 S-adenosyl-L-methionine = 3-methylsulfanyl-L-aspartate(89)-[ribosomal protein uS12]-hydrogen + (sulfur carrier)-H + 5'-deoxyadenosine + L-methionine + A + S-adenosyl-L-homocysteine + 2 H(+). Catalyzes the methylthiolation of an aspartic acid residue of ribosomal protein uS12. This chain is Ribosomal protein uS12 methylthiotransferase RimO, found in Acinetobacter baylyi (strain ATCC 33305 / BD413 / ADP1).